The sequence spans 272 residues: MEYIKKIALYMSVLLLIIFIGGCGNMKDEQKKEEQTNKTDSKEEQIKKSFAKTLDMYPIKNLEDLYDKEGYRDGEFEKGDKGMWVLYSSIVSEFKGESLKSRGMILKLDRNKRTAKGSYIIRELKEDKNHDVQKNEKKYPVKLVNNKIIPTEDVKNEDLKREIENFKLFSQYGEFKSLNTDRITNISYNPNAPNYSAEYKINDDDNNIKQLKNRFNIKSNKNPKLLFKGAGNIKGSSVGYKEIQIIFNRNKEESVSCIDSIEFKPSEGDYNE.

A signal peptide spans 1 to 22 (MEYIKKIALYMSVLLLIIFIGG). C23 carries the N-palmitoyl cysteine lipid modification. A lipid anchor (S-diacylglycerol cysteine) is attached at C23.

Belongs to the staphylococcal tandem lipoprotein family.

Its subcellular location is the cell membrane. This is an uncharacterized protein from Staphylococcus aureus (strain MRSA252).